A 316-amino-acid polypeptide reads, in one-letter code: PAK4-inhibitor inka2 (316 aa).

2 disordered regions span residues 43 to 74 and 108 to 130; these read RSSPPPSPDIEKPCVVPPRRAPRRDNRISHRT and YSEVSGGSLRGEEDDIVEEESET. The segment covering 65–74 has biased composition (basic and acidic residues); the sequence is RRDNRISHRT. A compositionally biased stretch (acidic residues) spans 119–129; the sequence is EEDDIVEEESE. The tract at residues 182–219 is inka box; it reads DSQDWTGCLLSQSRSRQPLVLGDNSFADLVKQWMDLPE.

It belongs to the INKA family.

The protein resides in the nucleus. In terms of biological role, inhibitor of the serine/threonine-protein kinase pak4/pak5. Acts by binding pak4/pak5 in a substrate-like manner, inhibiting the protein kinase activity. This Xenopus laevis (African clawed frog) protein is PAK4-inhibitor inka2.